A 270-amino-acid polypeptide reads, in one-letter code: Sulfur carrier protein FdhD (270 aa).

Residue Cys116 is the Cysteine persulfide intermediate of the active site. A Mo-bis(molybdopterin guanine dinucleotide)-binding site is contributed by 253–258; that stretch reads FAREGK.

This sequence belongs to the FdhD family.

The protein localises to the cytoplasm. Required for formate dehydrogenase (FDH) activity. Acts as a sulfur carrier protein that transfers sulfur from IscS to the molybdenum cofactor prior to its insertion into FDH. This chain is Sulfur carrier protein FdhD, found in Haemophilus influenzae (strain ATCC 51907 / DSM 11121 / KW20 / Rd).